The following is a 310-amino-acid chain: Methionyl-tRNA formyltransferase (310 aa).

Position 110–113 (110–113) interacts with (6S)-5,6,7,8-tetrahydrofolate; that stretch reads SLLP.

This sequence belongs to the Fmt family.

It catalyses the reaction L-methionyl-tRNA(fMet) + (6R)-10-formyltetrahydrofolate = N-formyl-L-methionyl-tRNA(fMet) + (6S)-5,6,7,8-tetrahydrofolate + H(+). Functionally, attaches a formyl group to the free amino group of methionyl-tRNA(fMet). The formyl group appears to play a dual role in the initiator identity of N-formylmethionyl-tRNA by promoting its recognition by IF2 and preventing the misappropriation of this tRNA by the elongation apparatus. The chain is Methionyl-tRNA formyltransferase from Streptomyces avermitilis (strain ATCC 31267 / DSM 46492 / JCM 5070 / NBRC 14893 / NCIMB 12804 / NRRL 8165 / MA-4680).